A 161-amino-acid chain; its full sequence is Troponin C, slow skeletal and cardiac muscles (161 aa).

Position 1 is an N-acetylmethionine (methionine 1). EF-hand domains follow at residues 16–51 (QKNE…LGQN), 52–87 (PTPE…CMKD), 92–127 (KTEE…TGET), and 128–161 (ITED…KGVE). Ca(2+) contacts are provided by aspartate 65, aspartate 67, serine 69, threonine 71, aspartate 105, asparagine 107, aspartate 109, tyrosine 111, glutamate 116, asparagine 143, aspartate 145, arginine 147, and glutamate 152.

It belongs to the troponin C family.

Troponin is the central regulatory protein of striated muscle contraction. Tn consists of three components: Tn-I which is the inhibitor of actomyosin ATPase, Tn-T which contains the binding site for tropomyosin and Tn-C. The binding of calcium to Tn-C abolishes the inhibitory action of Tn on actin filaments. This is Troponin C, slow skeletal and cardiac muscles (TNNC1) from Coturnix japonica (Japanese quail).